A 171-amino-acid polypeptide reads, in one-letter code: Calcium channel flower homolog (171 aa).

Topologically, residues 1-31 (MSGSGAAGAAAGPAPPAQEEGMTWWYRWLCR) are cytoplasmic. Residues 32-52 (LAGVLGAVSCAISGLFNCVTI) traverse the membrane as a helical segment. At 53–56 (HPLN) the chain is on the extracellular side. The chain crosses the membrane as a helical span at residues 57–77 (IAAGVWMIMNAFILLLCEAPF). Residues 78–101 (CCQFVEFANTVAEKVDRLRSWQKA) are Cytoplasmic-facing. Residues 102-122 (VFYCGMAIVPIVMSLTLTTLL) form a helical membrane-spanning segment. Residues 123-124 (GN) lie on the Extracellular side of the membrane. A helical transmembrane segment spans residues 125 to 141 (AIAFATGVLYGLSALGK). Residues 142–171 (KGDAISYARIQQQRQQADEEKLAETFEGEL) are Cytoplasmic-facing.

It belongs to the calcium channel flower family. In terms of assembly, interacts with adaptor protein complex 2 (AP-2). In terms of tissue distribution, expressed in neurons in the brain (at protein level). Expressed in neuroblastoma cell lines (at protein level). Expressed in cytotoxic T-lymphoocytes (at protein level). As to expression, low levels of expression in various tissues including the brain, eye, heart, liver and colon. Expression in the heart is at slightly higher levels than isoform 3. Expressed in skin cells. Very low levels of expression in the brain, liver and eye. Detected at very low levels of expression in skin cells. In terms of tissue distribution, expressed in various tissues, with highest levels of expression in the brain and eye. Expressed in skin cells. Low levels of expression in the liver, colon, heart and spleen. As to expression, barely detected in the brain and liver.

It is found in the cell membrane. The protein localises to the vesicle. In terms of biological role, transmembrane protein which mediates synaptic endocytosis and fitness-based cell culling. In response to different stimulus strengths, controls two major modes of synaptic vesicle (SV) retrieval in hippocampal neurons; Clathrin-mediated endocytosis (CME) in response to mild stimulation and activity-dependent bulk endocytosis (ADBE) in response to strong stimulation. In cytotoxic T-lymphoocytes (CTLs) facilitates calcium-dependent endocytosis of cytotoxic granules (CGs) at the immuno synapse. Different isoforms work as fitness fingerprints in 'loser' and 'winner' cells and thereby mediate win/lose decisions as part of the cell competition process. The protein is Calcium channel flower homolog (Cacfd1) of Mus musculus (Mouse).